The primary structure comprises 289 residues: 4-diphosphocytidyl-2-C-methyl-D-erythritol kinase (289 aa).

Lys-11 is a catalytic residue. Residue 93–103 (PLAAGLAGGSA) coordinates ATP. The active site involves Asp-135.

It belongs to the GHMP kinase family. IspE subfamily.

It carries out the reaction 4-CDP-2-C-methyl-D-erythritol + ATP = 4-CDP-2-C-methyl-D-erythritol 2-phosphate + ADP + H(+). It participates in isoprenoid biosynthesis; isopentenyl diphosphate biosynthesis via DXP pathway; isopentenyl diphosphate from 1-deoxy-D-xylulose 5-phosphate: step 3/6. Functionally, catalyzes the phosphorylation of the position 2 hydroxy group of 4-diphosphocytidyl-2C-methyl-D-erythritol. This Thermoanaerobacter pseudethanolicus (strain ATCC 33223 / 39E) (Clostridium thermohydrosulfuricum) protein is 4-diphosphocytidyl-2-C-methyl-D-erythritol kinase.